Consider the following 425-residue polypeptide: (S)-6-hydroxynicotine oxidase (425 aa).

FAD contacts are provided by residues Ser12, Glu31, 38–39 (GR), and 56–59 (GGAY). Position 166 (Asn166) interacts with (S)-6-hydroxynicotine. FAD is bound at residue Val226. 3 residues coordinate (S)-6-hydroxynicotine: Tyr311, Phe326, and Trp371. Residues Ser398 and 406–408 (GYI) each bind FAD. Tyr407 contacts (S)-6-hydroxynicotine.

Belongs to the flavin monoamine oxidase family. As to quaternary structure, homodimer. FAD serves as cofactor.

It is found in the cytoplasm. It catalyses the reaction (S)-6-hydroxynicotine + O2 + H2O = 6-hydroxypseudooxynicotine + H2O2. It carries out the reaction (S)-6-hydroxynicotine + O2 = 6-hydroxy-N-methylmyosmine + H2O2. It participates in alkaloid degradation; nicotine degradation; 6-hydroxypseudooxynicotine from nicotine (S-isomer route): step 2/2. Inhibited by (R)-6-hydroxynicotine. Inhibited by high concentrations of phenanthroline. Activity is strongly affected by Hg(2+) and p-chloromercuriphenylsulfonate, but not by N-ethylmaleimide and 5,5'-dithiobis-(2-nitrobenzoate). Functionally, involved in the degradation of L-nicotine. Catalyzes the oxidation of (S)-6-hydroxynicotine (6-hydroxy-L-nicotine) to 6-hydroxypseudooxynicotine. Oxidation of the pyrrolidine ring of (S)-6-hydroxynicotine leads to the formation of the optically inactive 6-hydroxy-N-methylmyosmine, which hydrolyzes spontaneously to 6-hydroxypseudooxynicotine. Acts with absolute stereospecificity on the L-form of 6-hydroxynicotine. Can also use (S)-6-hydroxynornicotine. The polypeptide is (S)-6-hydroxynicotine oxidase (Paenarthrobacter nicotinovorans (Arthrobacter nicotinovorans)).